The chain runs to 1439 residues: ABC transporter G family member 14 (1439 aa).

Positions 1–17 (MEENSNKFEQELKEIGQ) are enriched in basic and acidic residues. Residues 1–21 (MEENSNKFEQELKEIGQDRNQ) are disordered. In terms of domain architecture, ABC transporter 1 spans 117-370 (FSILNFFKPS…FMSLGFDCEP (254 aa)). The ABC transmembrane type-2 1 domain maps to 475–700 (LNDKFGLFTK…GSEFDAYRIC (226 aa)). 6 helical membrane-spanning segments follow: residues 479–499 (FGLFTKYLSVLIQAFVYSSVF), 516–536 (ILSAVIFNAFLSVGEMSMTFI), 564–584 (IPFTLLQVFLFSIIAYFMFGL), 589–609 (GKFFIFSFTLVGASLACTALF), 614–634 (YLCPSMYIAQNISNVFIIFML), and 734–754 (IIVYCWWIFFVICNMLAMEYI). The 245-residue stretch at 805-1049 (FTWQNIRYTV…LTSYFERHGV (245 aa)) folds into the ABC transporter 2 domain. 841–848 (GSSGAGKT) contributes to the ATP binding site. Positions 1141–1366 (YYTYGSFVQS…YNTCQNYTSA (226 aa)) constitute an ABC transmembrane type-2 2 domain. A run of 6 helical transmembrane segments spans residues 1144-1164 (YGSFVQSALCGLIIGFTFWNL), 1175-1195 (IFFIFEALMLGILLIFVVMPQ), 1217-1237 (FAISIVVVELPFIVISGTIFF), 1256-1276 (FYFWFIFVIFLFFCVSFGQAV), 1283-1303 (MFFAMTLIPLLIVFLFLFSGV), and 1413-1433 (VGIIICFFVFNILMVILFVYL).

It belongs to the ABC transporter superfamily. ABCG family. PDR (TC 3.A.1.205) subfamily.

The protein localises to the membrane. The protein is ABC transporter G family member 14 (abcG14) of Dictyostelium discoideum (Social amoeba).